A 508-amino-acid chain; its full sequence is Glycerol kinase (508 aa).

Residue threonine 15 coordinates ADP. ATP is bound by residues threonine 15, serine 16, and serine 17. Threonine 15 contacts sn-glycerol 3-phosphate. Position 19 (arginine 19) interacts with ADP. Sn-glycerol 3-phosphate-binding residues include arginine 85, glutamate 86, tyrosine 138, and aspartate 251. Residues arginine 85, glutamate 86, tyrosine 138, aspartate 251, and glutamine 252 each contribute to the glycerol site. ADP is bound by residues threonine 273, glycine 317, and glycine 419. ATP-binding residues include threonine 273, glycine 317, and glycine 419.

This sequence belongs to the FGGY kinase family.

It catalyses the reaction glycerol + ATP = sn-glycerol 3-phosphate + ADP + H(+). It participates in polyol metabolism; glycerol degradation via glycerol kinase pathway; sn-glycerol 3-phosphate from glycerol: step 1/1. With respect to regulation, inhibited by fructose 1,6-bisphosphate (FBP). In terms of biological role, key enzyme in the regulation of glycerol uptake and metabolism. Catalyzes the phosphorylation of glycerol to yield sn-glycerol 3-phosphate. The polypeptide is Glycerol kinase (Mycoplasma pneumoniae (strain ATCC 29342 / M129 / Subtype 1) (Mycoplasmoides pneumoniae)).